We begin with the raw amino-acid sequence, 95 residues long: Cobalt transport protein CbiN (95 aa).

Helical transmembrane passes span 5-25 (HILM…IYSG) and 67-87 (LLFA…FGYY).

The protein belongs to the CbiN family. In terms of assembly, forms an energy-coupling factor (ECF) transporter complex composed of an ATP-binding protein (A component, CbiO), a transmembrane protein (T component, CbiQ) and 2 possible substrate-capture proteins (S components, CbiM and CbiN) of unknown stoichimetry.

The protein localises to the cell membrane. Its pathway is cofactor biosynthesis; adenosylcobalamin biosynthesis. Part of the energy-coupling factor (ECF) transporter complex CbiMNOQ involved in cobalt import. This chain is Cobalt transport protein CbiN, found in Methanothermobacter thermautotrophicus (strain ATCC 29096 / DSM 1053 / JCM 10044 / NBRC 100330 / Delta H) (Methanobacterium thermoautotrophicum).